We begin with the raw amino-acid sequence, 372 residues long: Innexin-16 (372 aa).

4 consecutive transmembrane segments (helical) span residues 31–51, 106–126, 181–201, and 263–283; these read VVTT…NYVG, VPFL…FWII, LVMK…LNSF, and IFIF…GDFV. Residue Asn-352 is glycosylated (N-linked (GlcNAc...) asparagine).

Belongs to the pannexin family.

The protein localises to the cell membrane. It is found in the cell junction. Its subcellular location is the gap junction. In terms of biological role, structural component of the gap junctions. Required for signals downstream of defecation clock. This is Innexin-16 (inx-16) from Caenorhabditis elegans.